Consider the following 68-residue polypeptide: uncharacterized protein (68 aa).

The tract at residues 1–42 (MHLCQNGHYYKPHRASAEKVPYLKKKKKNSRNEGKAKKKNEK) is disordered.

This is an uncharacterized protein from Saccharomyces cerevisiae (strain ATCC 204508 / S288c) (Baker's yeast).